Reading from the N-terminus, the 614-residue chain is Phosphomethylpyrimidine synthase (614 aa).

Residues 1–16 are compositionally biased toward low complexity; it reads MNAQLSALQQQAQQLS. Positions 1–36 are disordered; it reads MNAQLSALQQQAQQLSESVTRPIPGSRKIHVPGSRP. Substrate-binding positions include N230, M259, Y288, H324, 344 to 346, 385 to 388, and E424; these read SRG and DGLR. H428 is a Zn(2+) binding site. Y451 lines the substrate pocket. Residue H492 participates in Zn(2+) binding. [4Fe-4S] cluster is bound by residues C572, C575, and C580.

It belongs to the ThiC family. Homodimer. Requires [4Fe-4S] cluster as cofactor.

The enzyme catalyses 5-amino-1-(5-phospho-beta-D-ribosyl)imidazole + S-adenosyl-L-methionine = 4-amino-2-methyl-5-(phosphooxymethyl)pyrimidine + CO + 5'-deoxyadenosine + formate + L-methionine + 3 H(+). It participates in cofactor biosynthesis; thiamine diphosphate biosynthesis. Its function is as follows. Catalyzes the synthesis of the hydroxymethylpyrimidine phosphate (HMP-P) moiety of thiamine from aminoimidazole ribotide (AIR) in a radical S-adenosyl-L-methionine (SAM)-dependent reaction. In Stenotrophomonas maltophilia (strain R551-3), this protein is Phosphomethylpyrimidine synthase.